The chain runs to 317 residues: ADIPOR-like receptor IZH2 (317 aa).

Topologically, residues methionine 1–asparagine 78 are cytoplasmic. The helical transmembrane segment at glutamate 79–leucine 99 threads the bilayer. The Extracellular portion of the chain corresponds to aspartate 100–threonine 110. Residues threonine 111–leucine 131 traverse the membrane as a helical segment. Residues serine 132–aspartate 153 are Cytoplasmic-facing. Residues tyrosine 154 to phenylalanine 174 form a helical membrane-spanning segment. Topologically, residues glutamate 175 to lysine 176 are extracellular. A helical membrane pass occupies residues phenylalanine 177–valine 197. The Cytoplasmic portion of the chain corresponds to serine 198–arginine 212. Residues alanine 213–cysteine 233 form a helical membrane-spanning segment. Over tyrosine 234 to glutamine 242 the chain is Extracellular. A helical membrane pass occupies residues isoleucine 243–glycine 263. Residues methionine 264–aspartate 276 are Cytoplasmic-facing. Residues isoleucine 277–leucine 297 form a helical membrane-spanning segment. Residues arginine 298–serine 317 lie on the Extracellular side of the membrane.

The protein belongs to the ADIPOR family.

It localises to the membrane. In terms of biological role, probable receptor, which is involved in metabolic pathways that regulate lipid metabolism such as fatty acid oxidation. The chain is ADIPOR-like receptor IZH2 (IZH2) from Saccharomyces cerevisiae (strain ATCC 204508 / S288c) (Baker's yeast).